A 345-amino-acid chain; its full sequence is Protein D345L (345 aa).

This sequence belongs to the asfivirus D345L family. In terms of assembly, interacts with IKKA/CHUK and IKBKB.

It localises to the host cytoplasm. Plays a role in the negative regulation of host NF-kappa-B signaling pathway. Mechanistically, recruits IKKA/CHUK and IKBKB to suppress their kinase activity towards NFKBIA. This is Protein D345L from African swine fever virus (isolate Tick/South Africa/Pretoriuskop Pr4/1996) (ASFV).